A 735-amino-acid chain; its full sequence is Mitochondrial potassium channel ATP-binding subunit (735 aa).

The N-terminal 25 residues, 1–25, are a transit peptide targeting the mitochondrion; it reads MLVHLFRVGIRGGPFPGRLLPPLRF. Residues 26-144 are Mitochondrial matrix-facing; that stretch reads QTFSAVRNTW…KLFWQFLHPH (119 aa). A helical membrane pass occupies residues 145 to 165; the sequence is LLVLGVAVVLALGAALVNVQI. Positions 150 to 437 constitute an ABC transmembrane type-1 domain; the sequence is VAVVLALGAA…LSVLFGQVVR (288 aa). Topologically, residues 166–195 are mitochondrial intermembrane; that stretch reads PLLLGQLVEVVAKYTRDHVGSFMTESQNLS. Residues 196-216 form a helical membrane-spanning segment; it reads THLLILYGVQGLLTFGYLVLL. At 217-295 the chain is on the mitochondrial matrix side; that stretch reads SHVGERMAVD…SLSMLSTRLT (79 aa). Residues 296-316 form a helical membrane-spanning segment; the sequence is LLLMVATPALMGVGTLMGSGL. At 317-735 the chain is on the mitochondrial intermembrane side; it reads RKLSRQCQEQ…EGPRSHQHKS (419 aa). The ABC transporter domain maps to 472-709; sequence VTFQNVCFSY…GGLYAELIRR (238 aa). 507 to 514 is a binding site for ATP; sequence GQSGGGKT. The tract at residues 712–735 is disordered; sequence LDAPRTAAPPPKKPEGPRSHQHKS.

Belongs to the ABC transporter superfamily. ABCB family. Multidrug resistance exporter (TC 3.A.1.201) subfamily. As to quaternary structure, the mitochondrial potassium channel (mitoK(ATP)) is composed of 4 subunits of CCDC51/MITOK and 4 subunits of ABCB8/MITOSUR. Interacts with C10orf88/PAAT. Interacts with NRP1; NRP1 regulates ABCB8/MITOSUR protein levels in mitochondria. In terms of tissue distribution, ubiquitous.

The protein localises to the mitochondrion inner membrane. Channel activity inhibited by ATP via ABCB8/MITOSUR subunit. Its function is as follows. ATP-binding subunit of the mitochondrial ATP-gated potassium channel (mitoK(ATP)). Together with pore-forming subunit CCDC51/MITOK of the mitoK(ATP) channel, mediates ATP-dependent potassium currents across the mitochondrial inner membrane. An increase in ATP intracellular levels closes the channel, inhibiting K(+) transport, whereas a decrease in ATP levels enhances K(+) uptake in the mitochondrial matrix. Plays a role in mitochondrial iron transport. Required for maintenance of normal cardiac function, possibly by influencing mitochondrial iron export and regulating the maturation of cytosolic iron sulfur cluster-containing enzymes. The sequence is that of Mitochondrial potassium channel ATP-binding subunit from Homo sapiens (Human).